The sequence spans 1072 residues: Carbamoyl phosphate synthase large chain (1072 aa).

Positions 1–401 (MPKRLDINTI…SLLKAVRSLE (401 aa)) are carboxyphosphate synthetic domain. Residues Arg129, Arg169, Gly175, Gly176, Lys208, Ile210, Glu215, Gly241, Val242, His243, Gln284, and Glu298 each contribute to the ATP site. The 195-residue stretch at 133-327 (RTLMQDLNEP…IAKLAAKIAV (195 aa)) folds into the ATP-grasp 1 domain. Mg(2+) is bound by residues Gln284, Glu298, and Asn300. The Mn(2+) site is built by Gln284, Glu298, and Asn300. Residues 402 to 546 (LGIYHLELDH…YSTYADENES (145 aa)) form an oligomerization domain region. The segment at 547 to 929 (IVTDRKSVVV…ALYKGLVASG (383 aa)) is carbamoyl phosphate synthetic domain. Residues 671 to 861 (EAALTKLGIP…MANVATKVIL (191 aa)) form the ATP-grasp 2 domain. Arg707, Arg746, Glu752, Gly777, Val778, His779, Ser780, Gln820, and Glu832 together coordinate ATP. Residues Gln820, Glu832, and Asn834 each contribute to the Mg(2+) site. Mn(2+)-binding residues include Gln820, Glu832, and Asn834. Positions 930 to 1072 (INIPTHGSVI…QTKRHEVVHA (143 aa)) constitute an MGS-like domain. The allosteric domain stretch occupies residues 930–1072 (INIPTHGSVI…QTKRHEVVHA (143 aa)).

This sequence belongs to the CarB family. Composed of two chains; the small (or glutamine) chain promotes the hydrolysis of glutamine to ammonia, which is used by the large (or ammonia) chain to synthesize carbamoyl phosphate. Tetramer of heterodimers (alpha,beta)4. The cofactor is Mg(2+). Mn(2+) serves as cofactor.

It catalyses the reaction hydrogencarbonate + L-glutamine + 2 ATP + H2O = carbamoyl phosphate + L-glutamate + 2 ADP + phosphate + 2 H(+). The catalysed reaction is hydrogencarbonate + NH4(+) + 2 ATP = carbamoyl phosphate + 2 ADP + phosphate + 2 H(+). The protein operates within amino-acid biosynthesis; L-arginine biosynthesis; carbamoyl phosphate from bicarbonate: step 1/1. It functions in the pathway pyrimidine metabolism; UMP biosynthesis via de novo pathway; (S)-dihydroorotate from bicarbonate: step 1/3. Its function is as follows. Large subunit of the glutamine-dependent carbamoyl phosphate synthetase (CPSase). CPSase catalyzes the formation of carbamoyl phosphate from the ammonia moiety of glutamine, carbonate, and phosphate donated by ATP, constituting the first step of 2 biosynthetic pathways, one leading to arginine and/or urea and the other to pyrimidine nucleotides. The large subunit (synthetase) binds the substrates ammonia (free or transferred from glutamine from the small subunit), hydrogencarbonate and ATP and carries out an ATP-coupled ligase reaction, activating hydrogencarbonate by forming carboxy phosphate which reacts with ammonia to form carbamoyl phosphate. The chain is Carbamoyl phosphate synthase large chain from Bacillus cereus (strain AH187).